We begin with the raw amino-acid sequence, 500 residues long: NAD(P)H-quinone oxidoreductase chain 4, chloroplastic (500 aa).

The next 14 membrane-spanning stretches (helical) occupy residues 4–24 (FPWLTIIVVLPISAGSSIGFL), 37–57 (ICICILELLLTTYAFCYHFQL), 87–107 (MGPVLLTGFITTLATLAAWPV), 113–130 (LFHFLMLAMYSGQIGSFS), 134–154 (LLLFFMMWELELIPIYLLLSL), 167–187 (FILYTAGGSIFLLMGVSGMGL), 208–228 (ALEIIFYIGFFIAYAAKSPII), 242–262 (HYSTCMLLAGILLKMGAYGLV), 272–292 (AHSIFSPWLMIIGAIQIIYAA), 305–325 (IAYSSVSHMGFITIGIGSITD), 330–350 (GSILQIISHGFIGAALFFLAG), 386–406 (LALPGMSGFVAESVVFLGIIT), 416–436 (ILITFVMAIGMILTPIYSLSM), and 462–482 (LFILICILLPVIGIGIYPDFV).

Belongs to the complex I subunit 4 family.

It is found in the plastid. Its subcellular location is the chloroplast thylakoid membrane. It carries out the reaction a plastoquinone + NADH + (n+1) H(+)(in) = a plastoquinol + NAD(+) + n H(+)(out). It catalyses the reaction a plastoquinone + NADPH + (n+1) H(+)(in) = a plastoquinol + NADP(+) + n H(+)(out). This is NAD(P)H-quinone oxidoreductase chain 4, chloroplastic from Illicium oligandrum (Star anise).